Here is a 61-residue protein sequence, read N- to C-terminus: Short neurotoxin 2 (61 aa).

4 disulfide bridges follow: C3/C23, C17/C40, C42/C53, and C54/C59.

It belongs to the three-finger toxin family. Short-chain subfamily. Type I alpha-neurotoxin sub-subfamily. As to expression, expressed by the venom gland.

Its subcellular location is the secreted. Binds to muscle nicotinic acetylcholine receptor (nAChR) and inhibit acetylcholine from binding to the receptor, thereby impairing neuromuscular transmission. This is Short neurotoxin 2 from Naja haje haje (Egyptian cobra).